We begin with the raw amino-acid sequence, 318 residues long: Porphobilinogen deaminase (318 aa).

Cysteine 241 carries the post-translational modification S-(dipyrrolylmethanemethyl)cysteine.

Belongs to the HMBS family. In terms of assembly, monomer. Requires dipyrromethane as cofactor.

The catalysed reaction is 4 porphobilinogen + H2O = hydroxymethylbilane + 4 NH4(+). It participates in porphyrin-containing compound metabolism; protoporphyrin-IX biosynthesis; coproporphyrinogen-III from 5-aminolevulinate: step 2/4. Its function is as follows. Tetrapolymerization of the monopyrrole PBG into the hydroxymethylbilane pre-uroporphyrinogen in several discrete steps. This chain is Porphobilinogen deaminase, found in Geobacter sp. (strain M21).